A 402-amino-acid polypeptide reads, in one-letter code: Speedy protein E2 (402 aa).

The tract at residues 1 to 89 (MDRTETRFRK…EEPEKELAPE (89 aa)) is disordered. Over residues 16 to 39 (GKITTSRQPHPQNEQSPQRSTSGY) the composition is skewed to polar residues. Residues 76-89 (DESEEEPEKELAPE) show a composition bias toward acidic residues.

This sequence belongs to the Speedy/Ringo family.

The sequence is that of Speedy protein E2 (SPDYE2) from Homo sapiens (Human).